Reading from the N-terminus, the 161-residue chain is Transcription elongation factor GreA (161 aa).

Positions 46–71 (AEYTAAKEKQSFLHGKLQELENNLAL) form a coiled coil.

This sequence belongs to the GreA/GreB family.

In terms of biological role, necessary for efficient RNA polymerase transcription elongation past template-encoded arresting sites. The arresting sites in DNA have the property of trapping a certain fraction of elongating RNA polymerases that pass through, resulting in locked ternary complexes. Cleavage of the nascent transcript by cleavage factors such as GreA or GreB allows the resumption of elongation from the new 3'terminus. GreA releases sequences of 2 to 3 nucleotides. The chain is Transcription elongation factor GreA from Syntrophus aciditrophicus (strain SB).